Consider the following 448-residue polypeptide: Probable xyloglucan 6-xylosyltransferase 1 (448 aa).

At Met-1–Phe-19 the chain is on the cytoplasmic side. A helical; Signal-anchor for type II membrane protein membrane pass occupies residues Ala-20 to Gly-42. Residues Ala-43–Thr-448 are Lumenal-facing. Residues His-71 to Ile-113 are disordered. Residue Asn-421 is glycosylated (N-linked (GlcNAc...) asparagine).

Belongs to the glycosyltransferase 34 family.

It localises to the golgi apparatus membrane. The enzyme catalyses Transfers an alpha-D-xylosyl residue from UDP-D-xylose to a glucose residue in xyloglucan, forming an alpha-(1-&gt;6)-D-xylosyl-D-glucose linkage.. Probable xyloglucan xylosyltransferase involved in the biosynthesis of xyloglucan in roots. This is Probable xyloglucan 6-xylosyltransferase 1 from Oryza sativa subsp. indica (Rice).